A 116-amino-acid polypeptide reads, in one-letter code: Small ribosomal subunit protein uS8c (116 aa).

The protein belongs to the universal ribosomal protein uS8 family. In terms of assembly, part of the 30S ribosomal subunit.

It localises to the plastid. The protein resides in the chloroplast. Functionally, one of the primary rRNA binding proteins, it binds directly to 16S rRNA central domain where it helps coordinate assembly of the platform of the 30S subunit. This is Small ribosomal subunit protein uS8c (rps8) from Musa acuminata (Banana).